Reading from the N-terminus, the 286-residue chain is Probable endonuclease 4 (286 aa).

H67, H107, E144, D178, H181, H215, D228, H230, and E260 together coordinate Zn(2+).

Belongs to the AP endonuclease 2 family. Zn(2+) serves as cofactor.

It catalyses the reaction Endonucleolytic cleavage to 5'-phosphooligonucleotide end-products.. Its function is as follows. Endonuclease IV plays a role in DNA repair. It cleaves phosphodiester bonds at apurinic or apyrimidinic (AP) sites, generating a 3'-hydroxyl group and a 5'-terminal sugar phosphate. The chain is Probable endonuclease 4 from Chloroflexus aggregans (strain MD-66 / DSM 9485).